The sequence spans 427 residues: Zinc-finger homeodomain protein 7 (427 aa).

Disordered regions lie at residues 1–60 (MEYK…SLMD) and 91–118 (LHAA…QRHH). Residues 10-28 (EEEEEEEEEEDDEEEDEEE) are compositionally biased toward acidic residues. Over residues 50-60 (SSASSPSSLMD) the composition is skewed to low complexity. The ZF-HD dimerization-type; degenerate zinc-finger motif lies at 163–211 (YRECLKNHAARMGAHVLDGCGEFMSSPGDGAAALACAACGCHRSFHRRE). Disordered stretches follow at residues 264–320 (KRPP…SKKR) and 375–427 (HLAK…QHDA). 2 stretches are compositionally biased toward low complexity: residues 271–283 (VSPA…LAES) and 301–312 (HAAAVVAASASA). Residues 318–381 (KKRFRTKFTA…NNKHLAKTPP (64 aa)) constitute a DNA-binding region (homeobox). Positions 380–401 (PPSPTSQPPPPPLHHDPSPPPP) are enriched in pro residues. Basic residues predominate over residues 402 to 416 (PHHHHHHHHHHHPPQ). A compositionally biased stretch (low complexity) spans 417–427 (HHQQQQQQHDA).

As to quaternary structure, homo- and heterodimer with other ZFHD proteins.

The protein localises to the nucleus. Putative transcription factor. The chain is Zinc-finger homeodomain protein 7 (ZHD7) from Oryza sativa subsp. japonica (Rice).